The following is a 460-amino-acid chain: tRNA modification GTPase MnmE (460 aa).

The (6S)-5-formyl-5,6,7,8-tetrahydrofolate site is built by Arg29, Glu91, and Lys132. The 157-residue stretch at 227-383 folds into the TrmE-type G domain; sequence GISIALIGKT…LIDTIIKKCG (157 aa). Asn237 is a K(+) binding site. GTP contacts are provided by residues 237–242, 256–262, and 281–284; these read NVGKSS, TNIPGTT, and DTAG. Residue Ser241 participates in Mg(2+) binding. 3 residues coordinate K(+): Thr256, Ile258, and Thr261. Thr262 serves as a coordination point for Mg(2+). Lys460 serves as a coordination point for (6S)-5-formyl-5,6,7,8-tetrahydrofolate.

It belongs to the TRAFAC class TrmE-Era-EngA-EngB-Septin-like GTPase superfamily. TrmE GTPase family. Homodimer. Heterotetramer of two MnmE and two MnmG subunits. K(+) is required as a cofactor.

It is found in the cytoplasm. In terms of biological role, exhibits a very high intrinsic GTPase hydrolysis rate. Involved in the addition of a carboxymethylaminomethyl (cmnm) group at the wobble position (U34) of certain tRNAs, forming tRNA-cmnm(5)s(2)U34. The sequence is that of tRNA modification GTPase MnmE from Prochlorococcus marinus (strain MIT 9301).